A 214-amino-acid polypeptide reads, in one-letter code: Large ribosomal subunit protein uL16 (214 aa).

Arg32 is subject to Citrulline. Lys175 is covalently cross-linked (Glycyl lysine isopeptide (Lys-Gly) (interchain with G-Cter in SUMO2)). Lys188 is covalently cross-linked (Glycyl lysine isopeptide (Lys-Gly) (interchain with G-Cter in ubiquitin)).

This sequence belongs to the universal ribosomal protein uL16 family. As to quaternary structure, component of the large ribosomal subunit. Mature ribosomes consist of a small (40S) and a large (60S) subunit. The 40S subunit contains about 33 different proteins and 1 molecule of RNA (18S). The 60S subunit contains about 49 different proteins and 3 molecules of RNA (28S, 5.8S and 5S). In terms of processing, citrullinated by PADI4. Ufmylated by UFL1.

The protein localises to the cytoplasm. Its function is as follows. Component of the large ribosomal subunit. Plays a role in the formation of actively translating ribosomes. May play a role in the embryonic brain development. The sequence is that of Large ribosomal subunit protein uL16 (RPL10) from Oryctolagus cuniculus (Rabbit).